A 92-amino-acid polypeptide reads, in one-letter code: UPF0223 protein SPCG_1392 (92 aa).

Belongs to the UPF0223 family.

In Streptococcus pneumoniae (strain CGSP14), this protein is UPF0223 protein SPCG_1392.